The sequence spans 248 residues: Triosephosphate isomerase (248 aa).

9 to 11 contributes to the substrate binding site; the sequence is NWK. His95 (electrophile) is an active-site residue. Glu166 functions as the Proton acceptor in the catalytic mechanism. Substrate-binding positions include Gly172, Ser210, and 231-232; that span reads GG.

This sequence belongs to the triosephosphate isomerase family. In terms of assembly, homodimer.

It is found in the cytoplasm. The enzyme catalyses D-glyceraldehyde 3-phosphate = dihydroxyacetone phosphate. Its pathway is carbohydrate biosynthesis; gluconeogenesis. It functions in the pathway carbohydrate degradation; glycolysis; D-glyceraldehyde 3-phosphate from glycerone phosphate: step 1/1. Its function is as follows. Involved in the gluconeogenesis. Catalyzes stereospecifically the conversion of dihydroxyacetone phosphate (DHAP) to D-glyceraldehyde-3-phosphate (G3P). The protein is Triosephosphate isomerase of Delftia acidovorans (strain DSM 14801 / SPH-1).